The primary structure comprises 60 residues: MAVPRNRHSNARKNIRRSHDAKKARHAAVCNNCKQAFIPHTVCTSCGFYNGKAVMTVEKK.

The interval 1-21 (MAVPRNRHSNARKNIRRSHDA) is disordered.

It belongs to the bacterial ribosomal protein bL32 family.

The protein is Large ribosomal subunit protein bL32 of Chlamydia felis (strain Fe/C-56) (Chlamydophila felis).